Here is a 286-residue protein sequence, read N- to C-terminus: MTELRPFYEESQSIYDVSDEFFSLFLDPTMAYTCAYFEREDMTLEEAQNAKFDLALDKLHLEPGMTLLDIGCGWGGGLQRAIENYDVNVIGITLSRNQFEYSKAKLAKIPTERSVQVRLQGWDEFTDKVDRIVSIGAFEAFKMERYAAFFERSYDILPDDGRMLLHTILTYTQKQMHEMGVKVTMSDVRFMKFIGEEIFPGGQLPAQEDIFKFAQAADFSVEKVQLLQQHYARTLNIWAANLEANKDRAIALQSEEIYNKYMHYLTGCEHFFRKGISNVGQFTLTK.

Residues 32-33 (YT), 67-75 (LLDIGCGWG), 93-98 (TLSRNQ), and 122-123 (WD) contribute to the S-adenosyl-L-methionine site. C268 is an active-site residue.

This sequence belongs to the CFA/CMAS family.

Its subcellular location is the cytoplasm. In terms of biological role, methyltransferase that modifies short-chain fatty acids. In vitro, catalyzes the transfer of the methyl group from S-adenosyl-L-methionine (SAM) to the double bond of phospholipid-linked oleic acid to produce tuberculostearic acid (10-methylstearic-acid or TSA). The chain is S-adenosylmethionine-dependent methyltransferase UmaA from Mycobacterium tuberculosis (strain ATCC 25618 / H37Rv).